The primary structure comprises 610 residues: uncharacterized protein (610 aa).

Polar residues predominate over residues 1–28 (MDSPSTSESPLKKNTIQDFGESNMTESP). Residues 1–36 (MDSPSTSESPLKKNTIQDFGESNMTESPQSKEEIDE) are disordered. An RING-type zinc finger spans residues 41 to 82 (CSVCKNEIIDTTSLSDCCHEFCYDCIVGWLTKGSGPFCPMCK). 2 disordered regions span residues 390-411 (YRGQ…FRPA) and 431-515 (TSSA…SADR). Residues 432–447 (SSAGAGSARSRGSDSV) show a composition bias toward low complexity. Acidic residues-rich tracts occupy residues 448–470 (VEID…EDSD) and 478–487 (SEEDSDEEIQ).

This is an uncharacterized protein from Caenorhabditis elegans.